A 384-amino-acid polypeptide reads, in one-letter code: CDP-diacylglycerol--serine O-phosphatidyltransferase (384 aa).

Belongs to the CDP-alcohol phosphatidyltransferase class-I family.

Its subcellular location is the membrane. It catalyses the reaction a CDP-1,2-diacyl-sn-glycerol + L-serine = a 1,2-diacyl-sn-glycero-3-phospho-L-serine + CMP + H(+). It participates in phospholipid metabolism; phosphatidylethanolamine biosynthesis; phosphatidylethanolamine from CDP-diacylglycerol: step 1/2. In Encephalitozoon cuniculi (strain GB-M1) (Microsporidian parasite), this protein is CDP-diacylglycerol--serine O-phosphatidyltransferase (PSS).